Here is a 357-residue protein sequence, read N- to C-terminus: 3-isopropylmalate dehydrogenase (357 aa).

76 to 89 (GPKWDDLPSEKRPE) contributes to the NAD(+) binding site. Residues Arg96, Arg106, Arg135, and Asp224 each coordinate substrate. Positions 224, 248, and 252 each coordinate Mg(2+). Residue 282–294 (GSAPDIAGQDKAN) coordinates NAD(+).

This sequence belongs to the isocitrate and isopropylmalate dehydrogenases family. LeuB type 1 subfamily. In terms of assembly, homodimer. It depends on Mg(2+) as a cofactor. Requires Mn(2+) as cofactor.

Its subcellular location is the cytoplasm. It carries out the reaction (2R,3S)-3-isopropylmalate + NAD(+) = 4-methyl-2-oxopentanoate + CO2 + NADH. It functions in the pathway amino-acid biosynthesis; L-leucine biosynthesis; L-leucine from 3-methyl-2-oxobutanoate: step 3/4. Functionally, catalyzes the oxidation of 3-carboxy-2-hydroxy-4-methylpentanoate (3-isopropylmalate) to 3-carboxy-4-methyl-2-oxopentanoate. The product decarboxylates to 4-methyl-2 oxopentanoate. The protein is 3-isopropylmalate dehydrogenase of Nitratidesulfovibrio vulgaris (strain ATCC 29579 / DSM 644 / CCUG 34227 / NCIMB 8303 / VKM B-1760 / Hildenborough) (Desulfovibrio vulgaris).